The following is a 1720-amino-acid chain: TOG array regulator of axonemal microtubules protein 1 (1720 aa).

TOG regions lie at residues 94–312 (EEDT…RRLE) and 352–596 (PQEL…MPSS). HEAT repeat units follow at residues 175–212 (AFSL…RSPG), 214–247 (VLRT…TEDL), 251–289 (LDLT…RLGQ), 345–384 (NLKF…KFNP), 390–427 (SSLV…RLGE), 431–466 (QFLG…MKEV), 467–504 (GPQQ…YPSE), and 506–543 (FDLP…SMGS). Polar residues-rich tracts occupy residues 794 to 809 (FGSQ…QNPS), 819 to 829 (PVSSPRTSPKH), 842 to 852 (DNSVNFSNSWP), and 868 to 877 (LVSQKSSDPT). Disordered regions lie at residues 794 to 924 (FGSQ…SLLP), 970 to 998 (HSSL…ESPD), and 1067 to 1087 (KKIS…NPQQ). Polar residues predominate over residues 1073 to 1087 (AEQSPSAGSSSNPQQ). Residues 1256-1425 (EIALTEALRL…YIKDSVRNLQ (170 aa)) are TOG 3. HEAT repeat units follow at residues 1294–1331 (TKLH…YLKK) and 1335–1372 (QELD…NVTP). A disordered region spans residues 1430 to 1462 (GEIPLDTPSAKGRRSHTGSVGNTRSSSVSRDAF). Positions 1446-1458 (TGSVGNTRSSSVS) are enriched in polar residues. Residues 1484–1720 (SLESAEYLKL…LLDMTILNEL (237 aa)) are TOG 4. HEAT repeat units lie at residues 1485 to 1522 (LESA…NNQD), 1526 to 1563 (GNIV…LLRD), and 1567 to 1605 (PIIN…HVDN).

The protein belongs to the Crescerin family. Interacts with ARMC9, CCDC66, CEP104 and CSPP1.

It is found in the cell projection. It localises to the cilium. The protein resides in the cytoplasm. Its subcellular location is the cytoskeleton. The protein localises to the cilium axoneme. In terms of biological role, involved in ciliogenesis. It is required for appropriate acetylation and polyglutamylation of ciliary microtubules, and regulation of cilium length. Interacts with microtubules and promotes microtubule polymerization via its HEAT repeat domains, especially those in TOG region 2 and 4. In Homo sapiens (Human), this protein is TOG array regulator of axonemal microtubules protein 1.